The following is a 179-amino-acid chain: ADP-ribosylation factor (179 aa).

The N-myristoyl glycine moiety is linked to residue G2. GTP-binding positions include 24-31 (GLDAAGKT), 67-71 (DVGGQ), and 126-129 (NKQD).

This sequence belongs to the small GTPase superfamily. Arf family.

It localises to the golgi apparatus. GTP-binding protein involved in protein trafficking; may modulate vesicle budding and uncoating within the Golgi apparatus. This is ADP-ribosylation factor (ARF1) from Candida albicans (strain SC5314 / ATCC MYA-2876) (Yeast).